Consider the following 92-residue polypeptide: PqqA binding protein (92 aa).

Belongs to the PqqD family. Monomer. Interacts with PqqE.

It functions in the pathway cofactor biosynthesis; pyrroloquinoline quinone biosynthesis. Its function is as follows. Functions as a PqqA binding protein and presents PqqA to PqqE, in the pyrroloquinoline quinone (PQQ) biosynthetic pathway. The chain is PqqA binding protein from Azotobacter vinelandii (strain DJ / ATCC BAA-1303).